We begin with the raw amino-acid sequence, 188 residues long: Putative 3-methyladenine DNA glycosylase (188 aa).

Belongs to the DNA glycosylase MPG family.

This Ehrlichia ruminantium (strain Gardel) protein is Putative 3-methyladenine DNA glycosylase.